The following is a 187-amino-acid chain: UPF0200 protein MA_4660 (187 aa).

Position 9 to 16 (9 to 16) interacts with ATP; sequence GMPASGKS.

It belongs to the UPF0200 family.

This Methanosarcina acetivorans (strain ATCC 35395 / DSM 2834 / JCM 12185 / C2A) protein is UPF0200 protein MA_4660.